Reading from the N-terminus, the 330-residue chain is Putative [LysW]-L-2-aminoadipate/[LysW]-L-glutamate phosphate reductase (330 aa).

NADP(+) is bound at residue 10 to 13 (SGYI). C142 is an active-site residue. N297 contributes to the NADP(+) binding site.

This sequence belongs to the NAGSA dehydrogenase family. Type 1 subfamily. LysY sub-subfamily.

It localises to the cytoplasm. The enzyme catalyses [amino-group carrier protein]-C-terminal-N-(1-carboxy-5-oxopentan-1-yl)-L-glutamine + phosphate + NADP(+) = [amino-group carrier protein]-C-terminal-N-(1-carboxy-5-phosphooxy-5-oxopentan-1-yl)-L-glutamine + NADPH + H(+). The catalysed reaction is [amino-group carrier protein]-C-terminal-gamma-(L-glutamyl-5-semialdehyde)-L-glutamate + phosphate + NADP(+) = [amino-group carrier protein]-C-terminal-gamma-(5-phospho-L-glutamyl)-L-glutamate + NADPH + H(+). The protein operates within amino-acid biosynthesis; L-lysine biosynthesis via AAA pathway; L-lysine from L-alpha-aminoadipate (Thermus route): step 3/5. It participates in amino-acid biosynthesis; L-arginine biosynthesis. Its function is as follows. Involved in both the arginine and lysine biosynthetic pathways. The polypeptide is Putative [LysW]-L-2-aminoadipate/[LysW]-L-glutamate phosphate reductase (Pyrococcus furiosus (strain ATCC 43587 / DSM 3638 / JCM 8422 / Vc1)).